Reading from the N-terminus, the 1117-residue chain is A disintegrin and metalloproteinase with thrombospondin motifs 6 (1117 aa).

Residues 1-21 (MEILWKTLTWILSLIMASSEF) form the signal peptide. A propeptide spanning residues 22 to 244 (HSDHRLSYSS…NTHIHHRQKR (223 aa)) is cleaved from the precursor. N-linked (GlcNAc...) asparagine glycosylation is found at Asn99, Asn172, Asn222, and Asn234. Residues 250–468 (RFVETLVVAD…GRGTCLDNEP (219 aa)) enclose the Peptidase M12B domain. Cystine bridges form between Cys326–Cys387, Cys362–Cys369, Cys381–Cys463, Cys420–Cys447, Cys490–Cys512, Cys501–Cys519, Cys507–Cys542, Cys532–Cys547, Cys570–Cys607, Cys574–Cys612, and Cys585–Cys597. Position 403 (His403) interacts with Zn(2+). The active site involves Glu404. Residues His407 and His413 each contribute to the Zn(2+) site. Residues 495 to 557 (GATSRQCKYG…VPFGTWPQSI (63 aa)) form the Disintegrin domain. Residues 558 to 613 (DGGWGPWSLWGECSRTCGGGVSSSLRHCDSPAPSGGGKYCLGERKRYRSCNTDPCP) enclose the TSP type-1 1 domain. Residues 717–843 (DAIEGFFNDS…GSGDNEVGFT (127 aa)) form a spacer region. Asn724 is a glycosylation site (N-linked (GlcNAc...) asparagine). 4 consecutive TSP type-1 domains span residues 840–900 (VGFT…EPCP), 902–960 (EWFI…QSCP), 962–1007 (QWVA…SKPP), and 1018–1073 (PPPR…SKCD). 3 cysteine pairs are disulfide-bonded: Cys911-Cys954, Cys915-Cys959, and Cys926-Cys943. N-linked (GlcNAc...) asparagine glycosylation occurs at Asn956. Residues 1079 to 1117 (NTEECKDVNKVAYCPLVLKFKFCSRAYFRQMCCKTCQGH) enclose the PLAC domain.

The cofactor is Zn(2+). The precursor is cleaved by a furin endopeptidase. Post-translationally, glycosylated. Can be O-fucosylated by POFUT2 on a serine or a threonine residue found within the consensus sequence C1-X(2)-(S/T)-C2-G of the TSP type-1 repeat domains where C1 and C2 are the first and second cysteine residue of the repeat, respectively. Fucosylated repeats can then be further glycosylated by the addition of a beta-1,3-glucose residue by the glucosyltransferase, B3GALTL. Fucosylation mediates the efficient secretion of ADAMTS family members. Can also be C-glycosylated with one or two mannose molecules on tryptophan residues within the consensus sequence W-X-X-W of the TPRs, and N-glycosylated. These other glycosylations can also facilitate secretion. In terms of tissue distribution, expressed at low levels in placenta and barely detectable in a number of other tissues.

It is found in the secreted. Its subcellular location is the extracellular space. The protein resides in the extracellular matrix. This is A disintegrin and metalloproteinase with thrombospondin motifs 6 (ADAMTS6) from Homo sapiens (Human).